Consider the following 263-residue polypeptide: Trans-aconitate 2-methyltransferase (263 aa).

It belongs to the methyltransferase superfamily. Tam family.

Its subcellular location is the cytoplasm. It catalyses the reaction trans-aconitate + S-adenosyl-L-methionine = (E)-3-(methoxycarbonyl)pent-2-enedioate + S-adenosyl-L-homocysteine. Functionally, catalyzes the S-adenosylmethionine monomethyl esterification of trans-aconitate. This is Trans-aconitate 2-methyltransferase from Mycobacterium ulcerans (strain Agy99).